Reading from the N-terminus, the 150-residue chain is UPF0756 membrane protein HI_1074 (150 aa).

Helical transmembrane passes span methionine 1–leucine 21, tyrosine 52–glycine 72, glycine 81–alanine 101, and isoleucine 123–leucine 143.

The protein belongs to the UPF0756 family.

The protein resides in the cell membrane. This chain is UPF0756 membrane protein HI_1074, found in Haemophilus influenzae (strain ATCC 51907 / DSM 11121 / KW20 / Rd).